Here is a 380-residue protein sequence, read N- to C-terminus: Cell division protein FtsZ 2 (380 aa).

GTP contacts are provided by residues 47-51, 134-136, glutamate 165, arginine 168, and aspartate 211; these read GAGNN and GTG.

It belongs to the FtsZ family. In terms of assembly, homodimer. Polymerizes to form a dynamic ring structure in a strictly GTP-dependent manner. Interacts directly with several other division proteins.

The protein localises to the cytoplasm. Functionally, essential cell division protein that forms a contractile ring structure (Z ring) at the future cell division site. The regulation of the ring assembly controls the timing and the location of cell division. One of the functions of the FtsZ ring is to recruit other cell division proteins to the septum to produce a new cell wall between the dividing cells. Binds GTP and shows GTPase activity. The sequence is that of Cell division protein FtsZ 2 from Methanocaldococcus jannaschii (strain ATCC 43067 / DSM 2661 / JAL-1 / JCM 10045 / NBRC 100440) (Methanococcus jannaschii).